A 168-amino-acid polypeptide reads, in one-letter code: Secretory-abundant heat soluble protein 33020 (168 aa).

A signal peptide spans 1 to 19 (MARFLVALALFGVVAMTAA). Residues 26 to 57 (EWSGKPWLGKFVAEVSDKSENWEAFVDALGLP) form an SAHS-c1 region. Residues 72-100 (YKQGEHYHHILSLPDKNINKDIEFTLGQE) are SAHS-c2. The SAHS-c3 stretch occupies residues 113-162 (KYFEDGNKLVADVSIPAKGKSIHDVYDVQGDQLIKSYKVGDVVAKKWFKK).

The protein belongs to the Secretory-abundant heat soluble protein (SAHS) family.

It is found in the secreted. Secreted heat soluble protein acting as a molecular shield in water-deficient condition. Tardigrade-specific intrinsically disordered proteins (TDPs) are essential for desiccation tolerance by forming non-crystalline amorphous solids upon desiccation, and this vitrified state mirrors their protective capabilities. This chain is Secretory-abundant heat soluble protein 33020, found in Hypsibius exemplaris (Freshwater tardigrade).